Consider the following 352-residue polypeptide: Protein Wnt-3a (352 aa).

Residues 1–18 form the signal peptide; sequence MASFGYFLFLCGLSQALS. Cys77 and Cys88 are joined by a disulfide. Asn87 and Asn92 each carry an N-linked (GlcNAc...) asparagine glycan. Cystine bridges form between Cys128–Cys136, Cys138–Cys155, Cys203–Cys217, Cys205–Cys212, Cys281–Cys312, Cys297–Cys307, Cys311–Cys351, Cys327–Cys342, Cys329–Cys339, and Cys334–Cys335. Ser209 carries O-palmitoleoyl serine; by PORCN lipidation. N-linked (GlcNAc...) asparagine glycosylation is present at Asn298.

It belongs to the Wnt family. In terms of processing, palmitoleoylation is required for efficient binding to frizzled receptors. Depalmitoleoylation leads to inhibit the Wnt signaling pathway. Disulfide bonds have critical and distinct roles in secretion and activity. Loss of each conserved cysteine in WNT3A results in high molecular weight oxidized Wnt oligomers, which are formed through inter-Wnt disulfide bonding. In terms of tissue distribution, expressed in cornea. Isoform 1 is expressed in the primitive streak, dorsal neural tube, proximal otic vesicle, the apical ectodermal ridge and the epithelium of feather buds.

The protein localises to the secreted. Its subcellular location is the extracellular space. The protein resides in the extracellular matrix. It is found in the cytoplasm. In terms of biological role, ligand for members of the frizzled family of seven transmembrane receptors. Functions in the canonical Wnt signaling pathway that results in activation of transcription factors of the TCF/LEF family. Regulates chick apical ectodermal ridge formation. Required for normal embryonic mesoderm development and formation of caudal somites. Required for normal morphogenesis of the developing neural tube. This Gallus gallus (Chicken) protein is Protein Wnt-3a (WNT3A).